The sequence spans 257 residues: Neurotrophin-3 (257 aa).

The signal sequence occupies residues 1 to 18 (MSILFYVIFLAYLRGIQS). The propeptide occupies 19 to 138 (TNMDQRSLPE…VLNRTSRRKR (120 aa)). N-linked (GlcNAc...) asparagine glycosylation is present at N131. Intrachain disulfides connect C152–C217, C195–C246, and C205–C248.

It belongs to the NGF-beta family. In the embryo, the expression peak at E4.5 and decreases at later stages of development.

The protein localises to the secreted. Seems to promote the survival of visceral and proprioceptive sensory neurons. This is Neurotrophin-3 (NTF3) from Gallus gallus (Chicken).